A 467-amino-acid chain; its full sequence is Asparagine--tRNA ligase (467 aa).

Belongs to the class-II aminoacyl-tRNA synthetase family. As to quaternary structure, homodimer.

The protein localises to the cytoplasm. It catalyses the reaction tRNA(Asn) + L-asparagine + ATP = L-asparaginyl-tRNA(Asn) + AMP + diphosphate + H(+). This Bacteroides fragilis (strain YCH46) protein is Asparagine--tRNA ligase.